We begin with the raw amino-acid sequence, 169 residues long: Cell division inhibitor SulA (169 aa).

Residues 106-112 (ALRTGNY) are ftsZ binding. Residues 162–169 (KIHSNLYH) form a lon protease binding region.

It belongs to the SulA family. In terms of assembly, interacts with FtsZ. In terms of processing, is rapidly cleaved and degraded by the Lon protease once DNA damage is repaired.

Functionally, component of the SOS system and an inhibitor of cell division. Accumulation of SulA causes rapid cessation of cell division and the appearance of long, non-septate filaments. In the presence of GTP, binds a polymerization-competent form of FtsZ in a 1:1 ratio, thus inhibiting FtsZ polymerization and therefore preventing it from participating in the assembly of the Z ring. This mechanism prevents the premature segregation of damaged DNA to daughter cells during cell division. This Shigella boydii serotype 18 (strain CDC 3083-94 / BS512) protein is Cell division inhibitor SulA.